The chain runs to 614 residues: Ankyrin repeat domain-containing protein 55 (614 aa).

The tract at residues 1-20 (MMRQATMDFSTPSVFDQQRG) is disordered. Residues 7-16 (MDFSTPSVFD) are compositionally biased toward polar residues. 9 ANK repeats span residues 26–55 (VDLT…SILE), 60–89 (EGCT…NINM), 93–125 (YGRT…IPDK), 126–157 (NGRL…EINH), 161–190 (EGMT…DPTL), 194–223 (DFKT…GPSI), 230–260 (SGKT…NLQA), 264–293 (DDRT…DSNL), and 297–326 (NEST…TEPT). 4 disordered regions span residues 319–339 (QESR…PQKK), 354–375 (KKEE…EEDT), 454–476 (TSHA…SRSE), and 564–614 (RNNL…SDEN). The span at 354 to 373 (KKEEQRAHQKDPSRDRYREE) shows a compositional bias: basic and acidic residues. Phosphoserine is present on serine 475.

This Homo sapiens (Human) protein is Ankyrin repeat domain-containing protein 55 (ANKRD55).